A 155-amino-acid chain; its full sequence is Small ribosomal subunit protein uS7c (155 aa).

Belongs to the universal ribosomal protein uS7 family. As to quaternary structure, part of the 30S ribosomal subunit.

The protein resides in the plastid. Its subcellular location is the chloroplast. Functionally, one of the primary rRNA binding proteins, it binds directly to 16S rRNA where it nucleates assembly of the head domain of the 30S subunit. The protein is Small ribosomal subunit protein uS7c (rps7) of Spathiphyllum wallisii (Peace lily).